A 255-amino-acid chain; its full sequence is 1-(5-phosphoribosyl)-5-[(5-phosphoribosylamino)methylideneamino] imidazole-4-carboxamide isomerase (255 aa).

The Proton acceptor role is filled by D8. The Proton donor role is filled by D129.

Belongs to the HisA/HisF family.

Its subcellular location is the cytoplasm. It carries out the reaction 1-(5-phospho-beta-D-ribosyl)-5-[(5-phospho-beta-D-ribosylamino)methylideneamino]imidazole-4-carboxamide = 5-[(5-phospho-1-deoxy-D-ribulos-1-ylimino)methylamino]-1-(5-phospho-beta-D-ribosyl)imidazole-4-carboxamide. The protein operates within amino-acid biosynthesis; L-histidine biosynthesis; L-histidine from 5-phospho-alpha-D-ribose 1-diphosphate: step 4/9. In Prochlorococcus marinus (strain MIT 9515), this protein is 1-(5-phosphoribosyl)-5-[(5-phosphoribosylamino)methylideneamino] imidazole-4-carboxamide isomerase.